An 835-amino-acid chain; its full sequence is Serine/threonine-protein kinase TNNI3K (835 aa).

Glycine 2 carries the N-myristoyl glycine lipid modification. Positions 21–50 form a coiled coil; that stretch reads SESYAIIIERLEDNLQIKENEFQELRHIFG. ANK repeat units lie at residues 66 to 96, 100 to 129, 133 to 162, 166 to 195, 199 to 228, 234 to 263, 269 to 298, 304 to 335, 339 to 368, and 381 to 410; these read RGLSLLHLCCVCGGNKSHIRALMLKGLRPSR, NGFPALHLAVYKDSPELITSLLHSGADVQQ, GGLTALHIAAIAGHPEAAEVLLQHGANVNV, VFFTPLHIAAYYGHEQVTSVLLKFGADVNV, VGDRPLHLASAKGFFNIVKLLVEEGSKADV, EDHVPLHFCSRFGHHNIVSYLLQSDLEVQP, YGDTPLHLACYNGNFEVAKEIVQVTGTESL, FSETAFHSACTYGKNIDLVKFLLDQNAVNINH, DGHTGLHSACYHGHIRLVQFLLDNGADMNL, and DEQTCLMWAYEKGHDAIVTLLKHYKRPQEE. One can recognise a Protein kinase domain in the interval 463–723; it reads IEFHEIIGSG…EVVSKLEECL (261 aa). ATP is bound by residues 469-477 and lysine 490; that span reads IGSGSFGKV. The Proton acceptor role is filled by aspartate 588.

It belongs to the protein kinase superfamily. TKL Ser/Thr protein kinase family. MAP kinase kinase kinase subfamily. In terms of assembly, interacts with TNNI3, ACTC, ACTA1, MYBPC3, AIP, FABP3 and HADHB. Mg(2+) is required as a cofactor. Post-translationally, autophosphorylated.

It localises to the nucleus. It is found in the cytoplasm. The catalysed reaction is L-seryl-[protein] + ATP = O-phospho-L-seryl-[protein] + ADP + H(+). It catalyses the reaction L-threonyl-[protein] + ATP = O-phospho-L-threonyl-[protein] + ADP + H(+). May play a role in cardiac physiology. This Rattus norvegicus (Rat) protein is Serine/threonine-protein kinase TNNI3K.